We begin with the raw amino-acid sequence, 352 residues long: Macrophage-capping protein (352 aa).

Met-1 carries the N-acetylmethionine modification. The stretch at 27–75 (EKLKPVPIARESHGIFFSGDSYLVLHNGPEEASHLHLWIGQQSSRDEQG) is one Gelsolin-like 1 repeat. Residues 139–148 (RKLYQVKGKK) carry the Nuclear localization signal motif. Gelsolin-like repeat units lie at residues 150–190 (IRAT…LERN) and 265–311 (MNLT…KERQ). A Phosphoserine modification is found at Ser-341.

Belongs to the villin/gelsolin family. Interacts with NUP62. Interacts with NUTF2 and RAN; involved in CAPG nuclear import. Post-translationally, phosphorylated. Nuclear GCAP39 is more highly phosphorylated than cytoplasmic GCAP39. Present in a large variety of tissues and is particularly abundant in kidney and lung. Highly expressed in macrophages (at protein level).

It is found in the nucleus. It localises to the cytoplasm. The protein localises to the melanosome. Its subcellular location is the cell projection. The protein resides in the lamellipodium. It is found in the ruffle. Its function is as follows. Calcium-sensitive protein which reversibly blocks the barbed ends of actin filaments but does not sever preformed actin filaments. May play an important role in macrophage function. May play a role in regulating cytoplasmic and/or nuclear structures through potential interactions with actin. May bind DNA. Uncapping occurs either when Ca(2+) falls or when the concentration of polyphosphoinositide rises, both at low and high Ca(2+). This is Macrophage-capping protein (Capg) from Mus musculus (Mouse).